The primary structure comprises 936 residues: MTTGFLQKIFGSRNQRLVKQYQKTVAAINALEPQIEQLTDDQLRAKTTEFRQRVSSGESLDKLLPEAFAVCREASKRVLKMRHFDVQLIGGMVLHYGKIAEMRTGEGKTLVATLPVYLNALSGRGVHVVTVNDYLAQRDAEWMARLYNFLGMSVGINLSQMDHGLKQEAYAADITYGTNNEFGFDYLRDNMVYETDARVQRTLNFAVVDEVDSILIDEARTPLIISGQAEDHTELYVRMNALPPLLDRQIGEEKADGTGVEKPGDYTLDEKARQVFLTESGHEKAERLLAEWGLIGEGESLYAPQNITLMHHVYAALRAHTLFYKDQHYVVQNGEVVIVDEFTGRLMAGRRWSDGLHQAVEAKEHVKIQSENQTLASITFQNYFRMYAKLSGMTGTADTEAYEFNEIYGLETVVIPTNRPPKRIDKQDQIYKTAMERYNAVIRDIRDCYDRGQPVLVGTTSIENSELLSQLLNKAGLPHEVLNAKQHAREAAIVAEAGRPKRITIATNMAGRGTDIVLGGNAEKQAAFIEADLSIPEEEKAPRIQKLHDEWQTLHDQVKAAGGLHIIGTERHESRRIDNQLRGRAGRQGDPGSSRFYLSLEDPLLRIFAGDRVRAIMDRLKMPEGEAIEAGIVTRSIESAQRKVEARNFDIRKQLLEYDDVSNDQRKVIYQQRNELLEAHDITETIGAMRHGVITDIVRQFVPAGSIEEQWDVPELEEALRNDWQLDLAIQEMINESQSIDPDEILEAVLAAADEAYESKVEQVGRESFSAFERSVMLQTLDRSWREHLAALDHLRQGIHLRGYAQKNPKQEYKREAFELFAAMLDSVKLEVTRIVMNVQIQSPEQLEQAAEQMEEQGSHLENVEFRHADYSEGGAAVAAAPVAANAAAAMIGDAMAHGGSAAAPFSGDAVPKVGRNDPCPCGSGKKYKQCHGKIA.

Residues Gln-87, 105–109 (GEGKT), and Asp-515 contribute to the ATP site. The Zn(2+) site is built by Cys-920, Cys-922, Cys-931, and His-932.

It belongs to the SecA family. As to quaternary structure, monomer and homodimer. Part of the essential Sec protein translocation apparatus which comprises SecA, SecYEG and auxiliary proteins SecDF-YajC and YidC. The cofactor is Zn(2+).

The protein localises to the cell inner membrane. It is found in the cytoplasm. The enzyme catalyses ATP + H2O + cellular proteinSide 1 = ADP + phosphate + cellular proteinSide 2.. Its function is as follows. Part of the Sec protein translocase complex. Interacts with the SecYEG preprotein conducting channel. Has a central role in coupling the hydrolysis of ATP to the transfer of proteins into and across the cell membrane, serving both as a receptor for the preprotein-SecB complex and as an ATP-driven molecular motor driving the stepwise translocation of polypeptide chains across the membrane. This Paraburkholderia phymatum (strain DSM 17167 / CIP 108236 / LMG 21445 / STM815) (Burkholderia phymatum) protein is Protein translocase subunit SecA.